The chain runs to 628 residues: Biosynthetic arginine decarboxylase (628 aa).

Residue lysine 99 is modified to N6-(pyridoxal phosphate)lysine. Position 279–289 (valine 279–tyrosine 289) interacts with substrate.

It belongs to the Orn/Lys/Arg decarboxylase class-II family. SpeA subfamily. Mg(2+) is required as a cofactor. Requires pyridoxal 5'-phosphate as cofactor.

It catalyses the reaction L-arginine + H(+) = agmatine + CO2. The protein operates within amine and polyamine biosynthesis; agmatine biosynthesis; agmatine from L-arginine: step 1/1. In terms of biological role, catalyzes the biosynthesis of agmatine from arginine. The sequence is that of Biosynthetic arginine decarboxylase from Xylella fastidiosa (strain M12).